The following is a 261-amino-acid chain: 1-(5-phosphoribosyl)-5-[(5-phosphoribosylamino)methylideneamino] imidazole-4-carboxamide isomerase (261 aa).

The Proton acceptor role is filled by Asp-8. Residue Asp-130 is the Proton donor of the active site.

This sequence belongs to the HisA/HisF family.

The protein resides in the cytoplasm. The catalysed reaction is 1-(5-phospho-beta-D-ribosyl)-5-[(5-phospho-beta-D-ribosylamino)methylideneamino]imidazole-4-carboxamide = 5-[(5-phospho-1-deoxy-D-ribulos-1-ylimino)methylamino]-1-(5-phospho-beta-D-ribosyl)imidazole-4-carboxamide. The protein operates within amino-acid biosynthesis; L-histidine biosynthesis; L-histidine from 5-phospho-alpha-D-ribose 1-diphosphate: step 4/9. The protein is 1-(5-phosphoribosyl)-5-[(5-phosphoribosylamino)methylideneamino] imidazole-4-carboxamide isomerase of Prosthecochloris aestuarii (strain DSM 271 / SK 413).